The following is a 155-amino-acid chain: Small ribosomal subunit protein uS7 (155 aa).

Belongs to the universal ribosomal protein uS7 family. In terms of assembly, part of the 30S ribosomal subunit. Contacts proteins S9 and S11.

Functionally, one of the primary rRNA binding proteins, it binds directly to 16S rRNA where it nucleates assembly of the head domain of the 30S subunit. Is located at the subunit interface close to the decoding center, probably blocks exit of the E-site tRNA. The chain is Small ribosomal subunit protein uS7 from Helicobacter hepaticus (strain ATCC 51449 / 3B1).